Consider the following 423-residue polypeptide: MTESVLDYMTRLGRAAREASRVIGRASTAQKNRALLAAANALDAARAELAAANEQDLATGRANGLEPALLERLELTPARIDGMIVGLRQVAALPDPVGAIRDMSFRPSGIQVGKMRVPLGVIGIIYESRPNVTIDAASLCLKSGNATILRGGSEAIHSNRAIAACIQRGLAAAELPAAVVQVVETTDRAAVGALITMPEYVDVIVPRGGRGLIERISRDARVPVIKHLDGICHVYVSEHADLPKAQRIAFNAKTYRYGICGAMETLLVDQRVAKDFLPSMAKQFREKGVELRGCERTRAIIEAVAATEEDWSTEYLAPILSIRVVDGLDQAIEHINHFGSHHTDSIVSENLADTRQFVAQVDSASVMINTPTCFADGFEYGLGAEIGISTDKLHARGPVGLEGLTCEKYIVVGDGQLRGQATV.

It belongs to the gamma-glutamyl phosphate reductase family.

Its subcellular location is the cytoplasm. The catalysed reaction is L-glutamate 5-semialdehyde + phosphate + NADP(+) = L-glutamyl 5-phosphate + NADPH + H(+). It functions in the pathway amino-acid biosynthesis; L-proline biosynthesis; L-glutamate 5-semialdehyde from L-glutamate: step 2/2. In terms of biological role, catalyzes the NADPH-dependent reduction of L-glutamate 5-phosphate into L-glutamate 5-semialdehyde and phosphate. The product spontaneously undergoes cyclization to form 1-pyrroline-5-carboxylate. This Pseudomonas fluorescens (strain Pf0-1) protein is Gamma-glutamyl phosphate reductase.